The chain runs to 306 residues: Eukaryotic translation initiation factor 2 subunit alpha (306 aa).

An S1 motif domain is found at 17 to 88; the sequence is DELVVVNVRQ…EKGYIDLSKR (72 aa). Position 52 is a phosphoserine (serine 52). A Phosphothreonine modification is found at threonine 179. Serine 273, serine 295, serine 303, and serine 305 each carry phosphoserine.

It belongs to the eIF-2-alpha family. As to quaternary structure, eukaryotic translation initiation factor 2 eIF2 is a heterotrimeric complex composed of an alpha, a beta and a gamma subunit.

Its subcellular location is the cytoplasm. It localises to the cytosol. EIF-2 functions in the early steps of protein synthesis by forming a ternary complex with GTP and initiator tRNA. This complex binds to a 40S ribosomal subunit, followed by mRNA binding to form a 43S pre-initiation complex. Junction of the 60S ribosomal subunit to form the 80S initiation complex is preceded by hydrolysis of the GTP bound to eIF-2 and release of an eIF-2-GDP binary complex. In order for eIF-2 to recycle and catalyze another round of initiation, the GDP bound to eIF-2 must exchange with GTP by way of a reaction catalyzed by eIF2B. This is Eukaryotic translation initiation factor 2 subunit alpha (tif211) from Schizosaccharomyces pombe (strain 972 / ATCC 24843) (Fission yeast).